The following is a 157-amino-acid chain: Cysteine protease Nivulian-2 (157 aa).

Belongs to the intron maturase 2 family. MatK subfamily. In terms of assembly, monomer. In terms of processing, glycosylated. In terms of tissue distribution, accumulates in latex (at protein level).

With respect to regulation, inhibited by HgCl(2), iodoacetamide (IAA) and, to a far lesser extent, by SDS, hydrogen peroxide H(1)O(2), KCl, NaCl, ZnCl(2), AgSO(4), CdCl(2), FeCl(3), PMSF, Pepstatin A and EDTA. Repressed moderately by many organic solvents such as diethyl ether, ethy lacetate, acetophenone, butanol, trichloroethylene, tetrahydrofuran, methanol, chloroform and dichloromethane, and, to a lesser extent, by propanol, benzyl alcohol and chlorobenzene. Its function is as follows. Cysteine protease inducing milk clotting by cleaving casein. Exhibits biomedical activities such as wound healing, haemostatic and antibacterial activity, as well as agricultural application in biocontrol process against the infectious management of the root knot nematode Meloidogyne incognita. This Euphorbia nivulia (Leafy milk hedge) protein is Cysteine protease Nivulian-2.